The primary structure comprises 122 residues: uncharacterized protein (122 aa).

Helical transmembrane passes span 43-63 (PIIITLFIFSFVISRMIIFFI) and 76-96 (AVADAIINSIALVCIIVILYF).

The protein resides in the membrane. This is an uncharacterized protein from Schizosaccharomyces pombe (strain 972 / ATCC 24843) (Fission yeast).